A 151-amino-acid chain; its full sequence is Probable cGMP 3',5'-cyclic phosphodiesterase subunit delta (151 aa).

Belongs to the PDE6D/unc-119 family. As to quaternary structure, interacts with Pde6.

The protein resides in the nucleus. The protein localises to the cytoplasm. In Aedes aegypti (Yellowfever mosquito), this protein is Probable cGMP 3',5'-cyclic phosphodiesterase subunit delta.